Consider the following 490-residue polypeptide: Hippocampus abundant transcript 1 protein (490 aa).

M1 is modified (N-acetylmethionine). Residues 1–40 (MTQGKKKKRAANRSIMLAKKIIIKDGGTPQGIGSPSVYHA) lie on the Extracellular side of the membrane. N12 is a glycosylation site (N-linked (GlcNAc...) asparagine). Residues 41 to 61 (VIVIFLEFFAWGLLTAPTLVV) form a helical membrane-spanning segment. The Cytoplasmic portion of the chain corresponds to 62–74 (LHETFPKHTFLMN). Residues 75-95 (GLIQGVKGLLSFLSAPLIGAL) form a helical membrane-spanning segment. Residues 96-103 (SDVWGRKS) are Extracellular-facing. A helical membrane pass occupies residues 104–124 (FLLLTVFFTCAPIPLMKISPW). Residues 125–126 (WY) lie on the Cytoplasmic side of the membrane. The helical transmembrane segment at 127 to 147 (FAVISVSGVFAVTFSVVFAYV) threads the bilayer. Topologically, residues 148–160 (ADITQEHERSMAY) are extracellular. The helical transmembrane segment at 161-181 (GLVSATFAASLVTSPAIGAYL) threads the bilayer. The Cytoplasmic portion of the chain corresponds to 182-188 (GRVYGDS). A helical transmembrane segment spans residues 189 to 209 (LVVVLATAIALLDICFILVAV). Topologically, residues 210–243 (PESLPEKMRPASWGAPISWEQADPFASLKKVGQD) are extracellular. Residues 244–264 (SIVLLICITVFLSYLPEAGQY) form a helical membrane-spanning segment. Residues 265–284 (SSFFLYLRQIMKFSPESVAA) are Cytoplasmic-facing. The chain crosses the membrane as a helical span at residues 285–305 (FIAVLGILSIIAQTIVLSLLM). Topologically, residues 306–313 (RSIGNKNT) are extracellular. A helical transmembrane segment spans residues 314-334 (ILLGLGFQILQLAWYGFGSEP). The Cytoplasmic segment spans residues 335 to 337 (WMM). A helical membrane pass occupies residues 338-358 (WAAGAVAAMSSITFPAVSALV). The Extracellular portion of the chain corresponds to 359-379 (SRTADADQQGVVQGMITGIRG). Residues 380 to 400 (LCNGLGPALYGFIFYIFHVEL) form a helical membrane-spanning segment. Over 401 to 427 (KELPITGTDLGTNTSPQHHFEQNSIIP) the chain is Cytoplasmic. The chain crosses the membrane as a helical span at residues 428 to 448 (GPPFLFGACSVLLALLVALFI). Residues 449 to 490 (PEHTNLSLRSSSWRKHCGSHSHPHNTQAPGEAKEPLLQDTNV) lie on the Extracellular side of the membrane. N-linked (GlcNAc...) asparagine glycosylation is present at N453. The disordered stretch occupies residues 465 to 490 (CGSHSHPHNTQAPGEAKEPLLQDTNV).

This sequence belongs to the major facilitator superfamily.

Its subcellular location is the membrane. This Homo sapiens (Human) protein is Hippocampus abundant transcript 1 protein.